Here is a 652-residue protein sequence, read N- to C-terminus: WD repeat-containing protein 70 (652 aa).

Disordered stretches follow at residues 1 to 22 (MERP…LAVT) and 45 to 171 (RRTA…IPDS). Residues 45–76 (RRTAVERSRKTLEAREREEEMNREKELRRQNE) show a composition bias toward basic and acidic residues. Residues 92 to 102 (SKSSSRDTSSS) are compositionally biased toward low complexity. Acidic residues-rich tracts occupy residues 103–115 (ESDE…DDEL) and 146–162 (EDVE…EEEE). WD repeat units lie at residues 178 to 217 (HGTK…ASFK), 225 to 266 (CECH…ECIK), 279 to 319 (GHTA…KQKS), 328 to 367 (GKKV…HPKF), 374 to 413 (DPGT…KPLF), 419 to 464 (PTMF…RVYE), and 467 to 506 (ITDA…QRGA). Residue K294 forms a Glycyl lysine isopeptide (Lys-Gly) (interchain with G-Cter in SUMO2) linkage. N6-acetyllysine is present on K450. Residues 538–563 (REPRQRSTRKQLEKDRLDPLKSHKPE) are compositionally biased toward basic and acidic residues. The segment at 538–577 (REPRQRSTRKQLEKDRLDPLKSHKPEPPVAGPGRGGRVGT) is disordered. T577 is modified (phosphothreonine). Glycyl lysine isopeptide (Lys-Gly) (interchain with G-Cter in SUMO2) cross-links involve residues K588 and K594. Residues S619 and S636 each carry the phosphoserine modification. Residues 629-652 (TMFAQVESDDEETKNEPEWKKRKI) form a disordered region. The span at 642–652 (KNEPEWKKRKI) shows a compositional bias: basic and acidic residues.

The protein belongs to the WD repeat GAD-1 family.

The polypeptide is WD repeat-containing protein 70 (WDR70) (Bos taurus (Bovine)).